The primary structure comprises 3411 residues: Genome polyprotein (3411 aa).

Residues 1 to 104 (MSGRKAQGKT…LSSRKRRSHD (104 aa)) lie on the Cytoplasmic side of the membrane. The hydrophobic; homodimerization of capsid protein C stretch occupies residues 38 to 72 (PGPSRGVQGFIFFFLFNILTGKKITAHLKRLWKML). The propeptide at 102 to 121 (SHDVLTVQFLILGMLLMTGG) is ER anchor for the capsid protein C, removed in mature form by serine protease NS3. Residues 105–125 (VLTVQFLILGMLLMTGGVTLV) form a helical membrane-spanning segment. The Extracellular segment spans residues 126–244 (RKNRWLLLNV…GERQLQKIER (119 aa)). Residues N134 and N150 are each glycosylated (N-linked (GlcNAc...) asparagine; by host). The chain crosses the membrane as a helical span at residues 245 to 265 (WLVRNPFFAVTALTIAYLVGS). Over 266-270 (NMTQR) the chain is Cytoplasmic. Residues 271-285 (VVIALLVLAVGPAYS) form a helical membrane-spanning segment. At 286-730 (AHCIGITDRD…TVFGSAFQGL (445 aa)) the chain is on the extracellular side. Cystine bridges form between C288-C315, C345-C401, C345-C406, C359-C390, C377-C401, C377-C406, C467-C568, and C585-C615. The segment at 383–396 (DRGWGNGCGLFGKG) is fusion peptide. Residues 731-751 (FGGLNWITKVIMGAVLIWVGI) traverse the membrane as a helical segment. Over 752–757 (NTRNMT) the chain is Extracellular. A helical transmembrane segment spans residues 758-778 (MSMSMILVGVIMMFLSLGVGA). Topologically, residues 779 to 1132 (DQGCAINFGK…LVRSWVTAGE (354 aa)) are extracellular. 6 cysteine pairs are disulfide-bonded: C782-C793, C833-C921, C957-C1002, C1058-C1107, C1069-C1091, and C1090-C1094. 2 N-linked (GlcNAc...) asparagine; by host glycosylation sites follow: N908 and N986. The helical transmembrane segment at 1133 to 1153 (IHAVPFGLVSMMIAMEVVLRK) threads the bilayer. Topologically, residues 1154 to 1201 (RQGPKQMLVGGVVLLGAMLVGQVTLLDLLKLTVAVGLHFHEMNNGGDA) are cytoplasmic. The chain crosses the membrane as a helical span at residues 1202–1222 (MYMALIAAFSIRPGLLIGFGL). Topologically, residues 1223 to 1287 (RTLWSPRERL…ILPLMALLTP (65 aa)) are lumenal. Residues 1288–1308 (VTMAEVRLATMLFCTVVIIGV) form a helical membrane-spanning segment. Topologically, residues 1309–1355 (LHQNSKDTSMQKTIPLVALTLTSYLGLTQPFLGLCAFLATRIFGRRS) are cytoplasmic. The helical transmembrane segment at 1356-1376 (IPVNEALAAAGLVGVLAGLAF) threads the bilayer. The Lumenal segment spans residues 1377–1378 (QE). The chain crosses the membrane as a helical span at residues 1379-1399 (MENFLGPIAVGGILMMLVSVA). Over 1400–1456 (GRVDGLELKKLGEVSWEEEAEISGSSARYDVALSEQGEFKLLSEEKVPWDQVVMTSL) the chain is Cytoplasmic. The interval 1407–1446 (LKKLGEVSWEEEAEISGSSARYDVALSEQGEFKLLSEEKV) is interacts with and activates NS3 protease. An intramembrane region (helical) is located at residues 1457–1477 (ALVGAAIHPFALLLVLAGWLF). At 1478–2157 (HVRGARRSGD…RNALSMMPEA (680 aa)) the chain is on the cytoplasmic side. In terms of domain architecture, Peptidase S7 spans 1485 to 1665 (SGDVLWDIPT…EVKEEGKEEL (181 aa)). Active-site charge relay system; for serine protease NS3 activity residues include H1537, D1561, and S1622. The 157-residue stretch at 1669-1825 (PTMLKKGMTT…HSNGEIEDVQ (157 aa)) folds into the Helicase ATP-binding domain. The tract at residues 1673 to 1676 (KKGM) is important for RNA-binding. 1682–1689 (FHPGAGKT) provides a ligand contact to ATP. Residues 1773–1776 (DEAH) carry the DEAH box motif. The Helicase C-terminal domain maps to 1820–1997 (EIEDVQTDIP…VRGGMVAPLY (178 aa)). K1877 is modified (N6-acetyllysine; by host). A disordered region spans residues 1942 to 1961 (AAQRRGRIGRNPNRDGDSYY). A helical transmembrane segment spans residues 2158 to 2178 (MTIVMLFILAGLLTSGMVIFF). At 2179–2186 (MSPKGISR) the chain is on the lumenal side. Positions 2187–2207 (MSMAMGTMAGCGYLMFLGGVK) form an intramembrane region, helical. Residues 2208 to 2209 (PT) lie on the Lumenal side of the membrane. Residues 2210–2230 (HISYIMLIFFVLMVVVIPEPG) form a helical membrane-spanning segment. Topologically, residues 2231-2241 (QQRSIQDNQVA) are cytoplasmic. A helical membrane pass occupies residues 2242-2262 (YLIIGILTLVSVVAANELGML). The Lumenal portion of the chain corresponds to 2263–2293 (EKTKEDLFGKKNLIPSSASPWSWPDLDLKPG). Residues 2294-2314 (AAWTVYVGIVTMLSPMLHHWI) constitute an intramembrane region (helical). Residues 2315–2360 (KVEYGNLSLSGIAQSASVLSFMDKGIPFMKMNISVIILLVSGWNSI) lie on the Lumenal side of the membrane. The helical transmembrane segment at 2361–2380 (TVMPLLCGIGCAMLHWSLIL) threads the bilayer. At 2381 to 2421 (PGIKAQQSKLAQRRVFHGVAKNPVVDGNPTVDIEEAPEMPA) the chain is on the cytoplasmic side. A helical transmembrane segment spans residues 2422 to 2442 (LYEKKLALYLLLALSLASVAM). Residues 2443-2445 (CRT) lie on the Lumenal side of the membrane. The chain crosses the membrane as a helical span at residues 2446–2466 (PFSLAEGIVLASAALGPLIEG). Residues 2467–3411 (NTSLLWNGPM…DADLQPGELI (945 aa)) are Cytoplasmic-facing. In terms of domain architecture, mRNA cap 0-1 NS5-type MT spans 2507–2771 (GSANGKTLGE…DVILPIGTRS (265 aa)). S2562 provides a ligand contact to S-adenosyl-L-methionine. S2562 is modified (phosphoserine). The For 2'-O-MTase activity role is filled by K2567. Positions 2592, 2593, 2610, 2611, 2637, and 2638 each coordinate S-adenosyl-L-methionine. The active-site For 2'-O-MTase activity is the D2652. Position 2653 (I2653) interacts with S-adenosyl-L-methionine. Catalysis depends on for 2'-O-MTase activity residues K2688 and E2724. Y2726 serves as a coordination point for S-adenosyl-L-methionine. The short motif at 2878–2911 (RKIMKVVNRWLFRHLAREKNPRLCTKEEFIAKVR) is the Nuclear localization signal element. Positions 2945, 2949, 2954, and 2957 each coordinate Zn(2+). The 153-residue stretch at 3035 to 3187 (GGFYADDTAG…RPIDDRFGLA (153 aa)) folds into the RdRp catalytic domain. 3 residues coordinate Zn(2+): H3222, C3238, and C3357.

In the N-terminal section; belongs to the class I-like SAM-binding methyltransferase superfamily. mRNA cap 0-1 NS5-type methyltransferase family. As to quaternary structure, homodimer. Interacts (via N-terminus) with host EXOC1 (via C-terminus); this interaction results in EXOC1 degradation through the proteasome degradation pathway. Forms heterodimers with envelope protein E in the endoplasmic reticulum and Golgi. In terms of assembly, homodimer; in the endoplasmic reticulum and Golgi. Interacts with protein prM. Interacts with non-structural protein 1. As to quaternary structure, homodimer; Homohexamer when secreted. Interacts with envelope protein E. NS1 interacts with NS4B. Interacts with host complement protein CFH; this interaction leads to the degradation of C3. Interacts (via N-terminus) with serine protease NS3. In terms of assembly, forms a heterodimer with serine protease NS3. May form homooligomers. As to quaternary structure, forms a heterodimer with NS2B. Interacts with non-structural protein 2A (via N-terminus). Interacts with NS4B. Interacts with unphosphorylated RNA-directed RNA polymerase NS5; this interaction stimulates RNA-directed RNA polymerase NS5 guanylyltransferase activity. NS3 interacts with host PDCD6IP; this interaction contributes to virion release. Interacts with serine protease NS3. In terms of assembly, homodimer. Interacts with host STAT2; this interaction prevents the establishment of cellular antiviral state. Interacts with serine protease NS3. Interacts with host TRIM23; this interaction leads to NS5 ubiquitination. Post-translationally, specific enzymatic cleavages in vivo yield mature proteins. The nascent capsid protein C contains a C-terminal hydrophobic domain that act as a signal sequence for translocation of prM into the lumen of the ER. Mature capsid protein C is cleaved at a site upstream of this hydrophobic domain by NS3. prM is cleaved in post-Golgi vesicles by a host furin, releasing the mature small envelope protein M, and peptide pr. Non-structural protein 2A-alpha, a C-terminally truncated form of non-structural protein 2A, results from partial cleavage by NS3. Specific enzymatic cleavages in vivo yield mature proteins peptide 2K acts as a signal sequence and is removed from the N-terminus of NS4B by the host signal peptidase in the ER lumen. Signal cleavage at the 2K-4B site requires a prior NS3 protease-mediated cleavage at the 4A-2K site. In terms of processing, cleaved in post-Golgi vesicles by a host furin, releasing the mature small envelope protein M, and peptide pr. This cleavage is incomplete as up to 30% of viral particles still carry uncleaved prM. N-glycosylated. Post-translationally, N-glycosylated. The excreted form is glycosylated and this is required for efficient secretion of the protein from infected cells. In terms of processing, polyubiquitinated; ubiquitination is probably mediated by host TRIM23 and is prerequisite for NS5-STAT2 interaction. NS5 is not ISGylated or sumoylated. Acetylated by host KAT5. Acetylation modulates NS3 RNA-binding and unwinding activities and plays an important positive role for viral replication. Post-translationally, phosphorylated on serines residues. This phosphorylation may trigger NS5 nuclear localization.

The protein localises to the virion. It is found in the host nucleus. The protein resides in the host cytoplasm. It localises to the host perinuclear region. Its subcellular location is the secreted. The protein localises to the virion membrane. It is found in the host endoplasmic reticulum membrane. The enzyme catalyses Selective hydrolysis of -Xaa-Xaa-|-Yaa- bonds in which each of the Xaa can be either Arg or Lys and Yaa can be either Ser or Ala.. It catalyses the reaction RNA(n) + a ribonucleoside 5'-triphosphate = RNA(n+1) + diphosphate. The catalysed reaction is a ribonucleoside 5'-triphosphate + H2O = a ribonucleoside 5'-diphosphate + phosphate + H(+). It carries out the reaction ATP + H2O = ADP + phosphate + H(+). The enzyme catalyses a 5'-end (5'-triphosphoguanosine)-ribonucleoside in mRNA + S-adenosyl-L-methionine = a 5'-end (N(7)-methyl 5'-triphosphoguanosine)-ribonucleoside in mRNA + S-adenosyl-L-homocysteine. It catalyses the reaction a 5'-end (N(7)-methyl 5'-triphosphoguanosine)-ribonucleoside in mRNA + S-adenosyl-L-methionine = a 5'-end (N(7)-methyl 5'-triphosphoguanosine)-(2'-O-methyl-ribonucleoside) in mRNA + S-adenosyl-L-homocysteine + H(+). Functionally, plays a role in virus budding by binding to the cell membrane and gathering the viral RNA into a nucleocapsid that forms the core of a mature virus particle. During virus entry, may induce genome penetration into the host cytoplasm after hemifusion induced by the surface proteins. Can migrate to the cell nucleus where it modulates host functions. Its function is as follows. Inhibits RNA silencing by interfering with host Dicer. In terms of biological role, prevents premature fusion activity of envelope proteins in trans-Golgi by binding to envelope protein E at pH6.0. After virion release in extracellular space, gets dissociated from E dimers. Acts as a chaperone for envelope protein E during intracellular virion assembly by masking and inactivating envelope protein E fusion peptide. prM is the only viral peptide matured by host furin in the trans-Golgi network probably to avoid catastrophic activation of the viral fusion activity in acidic Golgi compartment prior to virion release. prM-E cleavage is inefficient, and many virions are only partially matured. These uncleaved prM would play a role in immune evasion. Functionally, may play a role in virus budding. Exerts cytotoxic effects by activating a mitochondrial apoptotic pathway through M ectodomain. May display a viroporin activity. Its function is as follows. Binds to host cell surface receptor and mediates fusion between viral and cellular membranes. Envelope protein is synthesized in the endoplasmic reticulum in the form of heterodimer with protein prM. They play a role in virion budding in the ER, and the newly formed immature particle is covered with 60 spikes composed of heterodimer between precursor prM and envelope protein E. The virion is transported to the Golgi apparatus where the low pH causes dissociation of PrM-E heterodimers and formation of E homodimers. prM-E cleavage is inefficient, and many virions are only partially matured. These uncleaved prM would play a role in immune evasion. In terms of biological role, involved in immune evasion, pathogenesis and viral replication. Once cleaved off the polyprotein, is targeted to three destinations: the viral replication cycle, the plasma membrane and the extracellular compartment. Essential for viral replication. Required for formation of the replication complex and recruitment of other non-structural proteins to the ER-derived membrane structures. Excreted as a hexameric lipoparticle that plays a role against host immune response. Antagonizing the complement function. Binds to the host macrophages and dendritic cells. Inhibits signal transduction originating from Toll-like receptor 3 (TLR3). Component of the viral RNA replication complex that functions in virion assembly and antagonizes the host immune response. Functionally, required cofactor for the serine protease function of NS3. May have membrane-destabilizing activity and form viroporins. Its function is as follows. Displays three enzymatic activities: serine protease, NTPase and RNA helicase. NS3 serine protease, in association with NS2B, performs its autocleavage and cleaves the polyprotein at dibasic sites in the cytoplasm: C-prM, NS2A-NS2B, NS2B-NS3, NS3-NS4A, NS4A-2K and NS4B-NS5. NS3 RNA helicase binds RNA and unwinds dsRNA in the 3' to 5' direction. Also plays a role in virus assembly. In terms of biological role, regulates the ATPase activity of the NS3 helicase activity. NS4A allows NS3 helicase to conserve energy during unwinding. Functions as a signal peptide for NS4B and is required for the interferon antagonism activity of the latter. Functionally, induces the formation of ER-derived membrane vesicles where the viral replication takes place. Inhibits interferon (IFN)-induced host STAT1 phosphorylation and nuclear translocation, thereby preventing the establishment of cellular antiviral state by blocking the IFN-alpha/beta pathway. Its function is as follows. Replicates the viral (+) and (-) RNA genome, and performs the capping of genomes in the cytoplasm. NS5 methylates viral RNA cap at guanine N-7 and ribose 2'-O positions. Besides its role in RNA genome replication, also prevents the establishment of cellular antiviral state by blocking the interferon-alpha/beta (IFN-alpha/beta) signaling pathway. IFN-I induces binding of NS5 to host IFN-activated transcription factor STAT2, preventing its transcriptional activity. Host TRIM23 is the E3 ligase that interacts with and polyubiquitinates NS5 to promote its binding to STAT2 and trigger IFN-I signaling inhibition. In Yellow fever virus (strain Ghana/Asibi/1927) (YFV), this protein is Genome polyprotein.